Consider the following 202-residue polypeptide: uncharacterized protein (202 aa).

This is an uncharacterized protein from Treponema pallidum (strain Nichols).